The primary structure comprises 64 residues: Large ribosomal subunit protein bL35 (64 aa).

2 stretches are compositionally biased toward basic residues: residues 1–15 (MPKA…KRFR) and 23–33 (VRQKANRRHLL). Positions 1–47 (MPKAKTHSGASKRFRTTGSGKIVRQKANRRHLLEHKPTSRTRRLDGR) are disordered. Basic and acidic residues predominate over residues 34 to 46 (EHKPTSRTRRLDG).

Belongs to the bacterial ribosomal protein bL35 family.

The chain is Large ribosomal subunit protein bL35 from Mycobacteroides abscessus (strain ATCC 19977 / DSM 44196 / CCUG 20993 / CIP 104536 / JCM 13569 / NCTC 13031 / TMC 1543 / L948) (Mycobacterium abscessus).